Here is a 62-residue protein sequence, read N- to C-terminus: Pelophylaxin-4 (62 aa).

The first 22 residues, 1-22 (MLTLKKSMLLIFFLGTINFSLC), serve as a signal peptide directing secretion. Positions 23–45 (EQERNADEEERRDEPEERDVEVQ) are excised as a propeptide. Leu-60 is subject to Leucine amide. A propeptide is located at residue Gly-61.

In terms of tissue distribution, expressed by the skin glands.

Its subcellular location is the secreted. Functionally, antimicrobial peptide. This is Pelophylaxin-4 from Pelophylax fukienensis (Fukien gold-striped pond frog).